Reading from the N-terminus, the 326-residue chain is Pantothenate kinase (326 aa).

104–111 (GSVAVGKS) is a binding site for ATP.

It belongs to the prokaryotic pantothenate kinase family.

The protein localises to the cytoplasm. It catalyses the reaction (R)-pantothenate + ATP = (R)-4'-phosphopantothenate + ADP + H(+). Its pathway is cofactor biosynthesis; coenzyme A biosynthesis; CoA from (R)-pantothenate: step 1/5. The protein is Pantothenate kinase of Parvibaculum lavamentivorans (strain DS-1 / DSM 13023 / NCIMB 13966).